Here is a 215-residue protein sequence, read N- to C-terminus: Pyrrolidone-carboxylate peptidase (215 aa).

Residues E81, C144, and H168 contribute to the active site.

The protein belongs to the peptidase C15 family. As to quaternary structure, homotetramer.

It localises to the cytoplasm. It catalyses the reaction Release of an N-terminal pyroglutamyl group from a polypeptide, the second amino acid generally not being Pro.. In terms of biological role, removes 5-oxoproline from various penultimate amino acid residues except L-proline. In Bacillus amyloliquefaciens (Bacillus velezensis), this protein is Pyrrolidone-carboxylate peptidase (pcp).